The chain runs to 128 residues: 3-aminoacrylate deaminase RutC (128 aa).

It belongs to the RutC family.

It catalyses the reaction (Z)-3-aminoacrylate + H2O + H(+) = 3-oxopropanoate + NH4(+). Functionally, involved in pyrimidine catabolism. Catalyzes the deamination of 3-aminoacrylate to malonic semialdehyde, a reaction that can also occur spontaneously. RutC may facilitate the reaction and modulate the metabolic fitness, rather than catalyzing essential functions. The protein is 3-aminoacrylate deaminase RutC of Enterobacter sp. (strain 638).